The primary structure comprises 297 residues: uncharacterized protein (297 aa).

Disordered stretches follow at residues 12-43 (QNNN…TNDN), 65-85 (VPNS…DKPI), 122-151 (KVST…TNET), and 265-297 (SRLS…DQNN). The span at 65–79 (VPNSINVNTSSSGNK) shows a compositional bias: polar residues. Over residues 122–135 (KVSTTTTTTSSTSK) the composition is skewed to low complexity. Over residues 140–151 (QTITKPNKTNET) the composition is skewed to polar residues. Low complexity predominate over residues 268 to 287 (SSNNNNNNNNNNNNNNNNSN).

This is an uncharacterized protein from Dictyostelium discoideum (Social amoeba).